A 258-amino-acid chain; its full sequence is 6-phosphogluconolactonase (258 aa).

Position 2 is an N-acetylalanine (Ala-2). A Phosphoserine modification is found at Ser-49. Lys-180 is subject to N6-acetyllysine.

Belongs to the glucosamine/galactosamine-6-phosphate isomerase family. 6-phosphogluconolactonase subfamily.

It localises to the cytoplasm. It carries out the reaction 6-phospho-D-glucono-1,5-lactone + H2O = 6-phospho-D-gluconate + H(+). Its pathway is carbohydrate degradation; pentose phosphate pathway; D-ribulose 5-phosphate from D-glucose 6-phosphate (oxidative stage): step 2/3. Hydrolysis of 6-phosphogluconolactone to 6-phosphogluconate. The sequence is that of 6-phosphogluconolactonase from Homo sapiens (Human).